The primary structure comprises 356 residues: Heat-inducible transcription repressor HrcA (356 aa).

It belongs to the HrcA family.

Its function is as follows. Negative regulator of class I heat shock genes (grpE-dnaK-dnaJ and groELS operons). Prevents heat-shock induction of these operons. The protein is Heat-inducible transcription repressor HrcA of Chelativorans sp. (strain BNC1).